The sequence spans 170 residues: Ribosome maturation factor RimM (170 aa).

The region spanning 97–170 (HPDEYYWVDL…RIVVDWDPEF (74 aa)) is the PRC barrel domain.

It belongs to the RimM family. In terms of assembly, binds ribosomal protein uS19.

Its subcellular location is the cytoplasm. An accessory protein needed during the final step in the assembly of 30S ribosomal subunit, possibly for assembly of the head region. Essential for efficient processing of 16S rRNA. May be needed both before and after RbfA during the maturation of 16S rRNA. It has affinity for free ribosomal 30S subunits but not for 70S ribosomes. This is Ribosome maturation factor RimM from Xylella fastidiosa (strain M23).